Consider the following 257-residue polypeptide: Homeobox protein goosecoid (257 aa).

The segment at residues 160–219 (KRRHRTIFTDEQLEALENLFQETKYPDVGTREQLARKVHLREEKVEVWFKNRRAKWRRQK) is a DNA-binding region (homeobox). The interval 213–257 (AKWRRQKRSSSEESENAEKWNKTSSSKASPEKREEEGKSDLDSDS) is disordered. The segment covering 241-257 (SPEKREEEGKSDLDSDS) has biased composition (basic and acidic residues).

It belongs to the paired homeobox family. Bicoid subfamily.

It is found in the nucleus. Functionally, regulates chordin (CHRD). May play a role in spatial programing within discrete embryonic fields or lineage compartments during organogenesis. In concert with NKX3-2, plays a role in defining the structural components of the middle ear; required for the development of the entire tympanic ring. Probably involved in the regulatory networks that define neural crest cell fate specification and determine mesoderm cell lineages in mammals. This is Homeobox protein goosecoid (GSC) from Saguinus labiatus (Red-chested mustached tamarin).